The chain runs to 156 residues: Endoribonuclease YbeY (156 aa).

Zn(2+)-binding residues include histidine 122, histidine 126, and histidine 132.

The protein belongs to the endoribonuclease YbeY family. It depends on Zn(2+) as a cofactor.

It is found in the cytoplasm. Single strand-specific metallo-endoribonuclease involved in late-stage 70S ribosome quality control and in maturation of the 3' terminus of the 16S rRNA. This is Endoribonuclease YbeY from Bacillus cereus (strain ATCC 14579 / DSM 31 / CCUG 7414 / JCM 2152 / NBRC 15305 / NCIMB 9373 / NCTC 2599 / NRRL B-3711).